Consider the following 356-residue polypeptide: DNA polymerase IV (356 aa).

Residues 7-187 enclose the UmuC domain; sequence IIHVDMDAFY…LPVNRVPGVG (181 aa). 2 residues coordinate Mg(2+): D11 and D105. Residue E106 is part of the active site.

The protein belongs to the DNA polymerase type-Y family. As to quaternary structure, monomer. Requires Mg(2+) as cofactor.

The protein resides in the cytoplasm. The catalysed reaction is DNA(n) + a 2'-deoxyribonucleoside 5'-triphosphate = DNA(n+1) + diphosphate. In terms of biological role, poorly processive, error-prone DNA polymerase involved in untargeted mutagenesis. Copies undamaged DNA at stalled replication forks, which arise in vivo from mismatched or misaligned primer ends. These misaligned primers can be extended by PolIV. Exhibits no 3'-5' exonuclease (proofreading) activity. May be involved in translesional synthesis, in conjunction with the beta clamp from PolIII. This chain is DNA polymerase IV, found in Stenotrophomonas maltophilia (strain R551-3).